The following is a 238-amino-acid chain: Small ribosomal subunit protein eS4 (238 aa).

The 73-residue stretch at 38-110 (LPLAIIIRDV…EKKYYALIPI (73 aa)) folds into the S4 RNA-binding domain.

Belongs to the eukaryotic ribosomal protein eS4 family.

This Pyrobaculum islandicum (strain DSM 4184 / JCM 9189 / GEO3) protein is Small ribosomal subunit protein eS4.